The chain runs to 461 residues: Bifunctional protein HldE (461 aa).

The interval 1–311 (MKKILVVGDL…EEIALILNQT (311 aa)) is ribokinase. 191–194 (NRAE) contributes to the ATP binding site. D260 is an active-site residue. The interval 332–461 (FTNGCFDLLH…IEKIKRTHND (130 aa)) is cytidylyltransferase.

In the N-terminal section; belongs to the carbohydrate kinase PfkB family. It in the C-terminal section; belongs to the cytidylyltransferase family. In terms of assembly, homodimer.

It catalyses the reaction D-glycero-beta-D-manno-heptose 7-phosphate + ATP = D-glycero-beta-D-manno-heptose 1,7-bisphosphate + ADP + H(+). The catalysed reaction is D-glycero-beta-D-manno-heptose 1-phosphate + ATP + H(+) = ADP-D-glycero-beta-D-manno-heptose + diphosphate. It participates in nucleotide-sugar biosynthesis; ADP-L-glycero-beta-D-manno-heptose biosynthesis; ADP-L-glycero-beta-D-manno-heptose from D-glycero-beta-D-manno-heptose 7-phosphate: step 1/4. The protein operates within nucleotide-sugar biosynthesis; ADP-L-glycero-beta-D-manno-heptose biosynthesis; ADP-L-glycero-beta-D-manno-heptose from D-glycero-beta-D-manno-heptose 7-phosphate: step 3/4. Its function is as follows. Catalyzes the phosphorylation of D-glycero-D-manno-heptose 7-phosphate at the C-1 position to selectively form D-glycero-beta-D-manno-heptose-1,7-bisphosphate. Catalyzes the ADP transfer from ATP to D-glycero-beta-D-manno-heptose 1-phosphate, yielding ADP-D-glycero-beta-D-manno-heptose. This is Bifunctional protein HldE from Helicobacter pylori (strain P12).